A 346-amino-acid chain; its full sequence is Phosphate acyltransferase (346 aa).

The protein belongs to the PlsX family. As to quaternary structure, homodimer. Probably interacts with PlsY.

It localises to the cytoplasm. The catalysed reaction is a fatty acyl-[ACP] + phosphate = an acyl phosphate + holo-[ACP]. It functions in the pathway lipid metabolism; phospholipid metabolism. Its function is as follows. Catalyzes the reversible formation of acyl-phosphate (acyl-PO(4)) from acyl-[acyl-carrier-protein] (acyl-ACP). This enzyme utilizes acyl-ACP as fatty acyl donor, but not acyl-CoA. In Geotalea daltonii (strain DSM 22248 / JCM 15807 / FRC-32) (Geobacter daltonii), this protein is Phosphate acyltransferase.